We begin with the raw amino-acid sequence, 302 residues long: Ubiquitin thioesterase OTU1 (302 aa).

The tract at residues 5–83 is UBX-like; the sequence is RCKARSGTQP…IVEEDTSKPS (79 aa). Residues 103-228 enclose the OTU domain; sequence LARRVVPADN…GIHYDPLERK (126 aa). Residues 108-114 are cys-loop; it reads VPADNSC. Aspartate 111 is a catalytic residue. The active-site Nucleophile is the cysteine 114. Positions 167–177 are variable-loop; it reads IRREETWGGAI. The interval 217–221 is his-loop; sequence YDGIH. Isoleucine 220 contacts substrate. Histidine 221 is an active-site residue. The segment at 245 to 250 is S2 site; it reads DVVLAQ. The C2H2-type zinc finger occupies 272 to 296; sequence LRCMVCQKGLTGQVEAREHAKETGH. Histidine 296 is an active-site residue.

Its subcellular location is the cytoplasm. The enzyme catalyses Thiol-dependent hydrolysis of ester, thioester, amide, peptide and isopeptide bonds formed by the C-terminal Gly of ubiquitin (a 76-residue protein attached to proteins as an intracellular targeting signal).. Its function is as follows. Hydrolase that can remove conjugated ubiquitin from proteins and participates in endoplasmic reticulum-associated degradation (ERAD) for misfolded lumenal proteins. May act by triming the ubiquitin chain on the associated substrate to facilitate their threading through the VCP/p97 pore. Ubiquitin moieties on substrates may present a steric impediment to the threading process when the substrate is transferred to the VCP pore and threaded through VCP's axial channel. Mediates deubiquitination of 'Lys-27'-, 'Lys-29'- and 'Lys-33'-linked polyubiquitin chains. Also able to hydrolyze 'Lys-11'-linked ubiquitin chains. Cleaves both polyubiquitin and di-ubiquitin. The polypeptide is Ubiquitin thioesterase OTU1 (YOD1) (Gallus gallus (Chicken)).